Consider the following 539-residue polypeptide: Beta-apo-4'-carotenal oxygenase (539 aa).

Residues Glu-228 and Cys-262 contribute to the active site.

The protein belongs to the aldehyde dehydrogenase family.

It carries out the reaction 4'-apo-beta-carotenal + NAD(+) + H2O = neurosporaxanthin + NADH + 2 H(+). Its function is as follows. Beta-apo-4'-carotenal oxygenase involved in the last step of synthesis of neurosporaxanthin, a carboxylic apocarotenoid acting as an essential protective pigments and leading to orange pigmentation. Converts the aldehyde beta-apo-4'-carotenal into neurosporaxanthin. Is also able to use shorter apocarotenals as substrates (such as beta-apo-8'-carotenal (C30), beta-apo-10'-carotenal (C27), or the acyclic apocarotenal apo-8'-lycopenal (C30)), indicating wide substrate specificity. Neurosporaxanthin is synthesized from geranyl-geranyl pyrophosphate (GGPP) through several enzymatic activities. Phytoene synthase activity performed by the bifunctional enzyme carAR first produces phytoene from geranyl-geranyl pyrophosphate (GGPP). The phytoene dehydrogenase carB then introduces 4 desaturations to lead to lycopene which is substrate of the carotene cyclase activity of carAR that leads to the production of gamma-carotene. CarB then performs a 5th desaturation reaction to yield torulene. Torulene is the substrate of the dioxidase carT that breaks the molecule, removing five carbon atoms to yield beta-apo-4'-carotenal, whereas the aldehyde dehydrogenase carD mediates the last step by converting beta-apo-4'-carotenal into neurosporaxanthin. In Gibberella fujikuroi (strain CBS 195.34 / IMI 58289 / NRRL A-6831) (Bakanae and foot rot disease fungus), this protein is Beta-apo-4'-carotenal oxygenase.